A 295-amino-acid polypeptide reads, in one-letter code: Protoheme IX farnesyltransferase (295 aa).

The next 9 membrane-spanning stretches (helical) occupy residues 9 to 29 (ITKPGIIFGNVLSVAGGFFLA), 36 to 56 (FGVFLAAVIGTSLVVASGCVF), 80 to 100 (LVSLKLALLYATLLGIAGVGL), 108 to 128 (LAALFAVIGFVIYVGLYSLYL), 135 to 155 (GTLVGSLSGAMPPVIGYCAVS), 163 to 183 (LTLLVMFSLWQMPHSYAIAIF), 209 to 229 (IMLYILAFLVATLMLTVGGYA), 230 to 250 (GLNYLAVAAGMGMYWLYMAWK), and 265 to 285 (FVFSIFTITALSVMMSVDFQV).

It belongs to the UbiA prenyltransferase family. Protoheme IX farnesyltransferase subfamily.

The protein localises to the cell inner membrane. The catalysed reaction is heme b + (2E,6E)-farnesyl diphosphate + H2O = Fe(II)-heme o + diphosphate. It participates in porphyrin-containing compound metabolism; heme O biosynthesis; heme O from protoheme: step 1/1. Its function is as follows. Converts heme B (protoheme IX) to heme O by substitution of the vinyl group on carbon 2 of heme B porphyrin ring with a hydroxyethyl farnesyl side group. The polypeptide is Protoheme IX farnesyltransferase (Pseudomonas syringae pv. syringae (strain B728a)).